The sequence spans 354 residues: Sulfate permease CysP (354 aa).

8 helical membrane passes run 3–23 (LAAI…GAAA), 40–60 (ALIL…GEVV), 77–97 (IVCI…LLGI), 125–145 (LIIV…TYFV), 164–184 (ILGI…GMNN), 197–217 (VLDV…GALL), 293–313 (VWIV…SLFL), and 320–340 (IFIM…TKAI).

This sequence belongs to the inorganic phosphate transporter (PiT) (TC 2.A.20) family.

The protein localises to the cell membrane. Involved in the import of sulfate. The polypeptide is Sulfate permease CysP (cysP) (Bacillus subtilis (strain 168)).